The following is a 405-amino-acid chain: Acetate kinase (405 aa).

Position 7 (Asn-7) interacts with Mg(2+). Lys-14 lines the ATP pocket. Arg-98 serves as a coordination point for substrate. Asp-155 functions as the Proton donor/acceptor in the catalytic mechanism. ATP-binding positions include 214–218, 289–291, and 337–341; these read HLGNG, DLR, and GVGEN. Position 390 (Glu-390) interacts with Mg(2+).

This sequence belongs to the acetokinase family. As to quaternary structure, homodimer. It depends on Mg(2+) as a cofactor. The cofactor is Mn(2+).

The protein resides in the cytoplasm. The enzyme catalyses acetate + ATP = acetyl phosphate + ADP. The protein operates within metabolic intermediate biosynthesis; acetyl-CoA biosynthesis; acetyl-CoA from acetate: step 1/2. Catalyzes the formation of acetyl phosphate from acetate and ATP. Can also catalyze the reverse reaction. This chain is Acetate kinase, found in Gloeothece citriformis (strain PCC 7424) (Cyanothece sp. (strain PCC 7424)).